Here is a 778-residue protein sequence, read N- to C-terminus: Endonuclease MutS2 (778 aa).

328–335 (GPNTGGKT) serves as a coordination point for ATP. In terms of domain architecture, Smr spans 702–777 (LDLRGKRYEE…GSGATIVTFK (76 aa)).

This sequence belongs to the DNA mismatch repair MutS family. MutS2 subfamily. As to quaternary structure, homodimer. Binds to stalled ribosomes, contacting rRNA.

In terms of biological role, endonuclease that is involved in the suppression of homologous recombination and thus may have a key role in the control of bacterial genetic diversity. Its function is as follows. Acts as a ribosome collision sensor, splitting the ribosome into its 2 subunits. Detects stalled/collided 70S ribosomes which it binds and splits by an ATP-hydrolysis driven conformational change. Acts upstream of the ribosome quality control system (RQC), a ribosome-associated complex that mediates the extraction of incompletely synthesized nascent chains from stalled ribosomes and their subsequent degradation. Probably generates substrates for RQC. In Streptococcus pneumoniae (strain 70585), this protein is Endonuclease MutS2.